The chain runs to 418 residues: Metacaspase-2 (418 aa).

The disordered stretch occupies residues 68–113; that stretch reads PSPYTHAPHAPSPFNHAPPDSYPFTHAPPASSPFNHAPPGPPPPVH. Residues 70-80 are compositionally biased toward low complexity; sequence PYTHAPHAPSP. Residues 103–112 show a composition bias toward pro residues; it reads HAPPGPPPPV. Residues histidine 200 and cysteine 256 contribute to the active site. The tract at residues 385 to 406 is disordered; the sequence is PDEEEEVNQAPQKTQEPQLSAN. The segment covering 393 to 405 has biased composition (polar residues); sequence QAPQKTQEPQLSA.

This sequence belongs to the peptidase C14B family.

In terms of biological role, acts as a negative regulator of oxidative stress cell death and hypersensitive cell death response mediated by immune response. Acts via indirect or direct regulation of AMC1 at postranscriptional level. This is Metacaspase-2 (AMC2) from Arabidopsis thaliana (Mouse-ear cress).